A 382-amino-acid polypeptide reads, in one-letter code: MSLKEKTQSLFANAFGYPATHTIQAPGRVNLIGEHTDYNDGFVLPCAIDYQTVISCAPRDDRKVRVMAADYENQLDEFSLDAPIVAHESYQWANYVRGVVKHLQLRNNNFGGVDMVISGNVPQGAGLSSSASLEVAVGTVLQQLYHLPLDGAQIALNGQEAENQFVGCNCGIMDQLISALGKKDHALLIDCRSLGTKAVSMPKGVAVVIINSNFKRTLVGSEYNTRREQCETGARFFQQPALRDVTIEEFNAVAHELDPIVAKRVRHILTENARTVEAASALEQGDLKRMGELMAESHASMRDDFEITVPQIDTLVEIVKAVIGDKGGVRMTGGGFGGCIVALIPEELVPAVQQAVAEQYEAKTGIKETFYVCKPSQGAGQC.

34 to 37 contributes to the substrate binding site; sequence EHTD. 124-130 provides a ligand contact to ATP; that stretch reads GAGLSSS. Mg(2+)-binding residues include Ser130 and Glu162. The Proton acceptor role is filled by Asp174. Tyr223 is a substrate binding site.

It belongs to the GHMP kinase family. GalK subfamily.

The protein localises to the cytoplasm. It carries out the reaction alpha-D-galactose + ATP = alpha-D-galactose 1-phosphate + ADP + H(+). It participates in carbohydrate metabolism; galactose metabolism. Catalyzes the transfer of the gamma-phosphate of ATP to D-galactose to form alpha-D-galactose-1-phosphate (Gal-1-P). This chain is Galactokinase, found in Escherichia coli (strain SMS-3-5 / SECEC).